The following is a 175-amino-acid chain: MAVQPEVILGDITTLEVDVIVNAANPSLLGGGGVDGAIHRAAGPALLAACKQVLQQQGECPPGHAVITIAGDLPASAVIHTVGPVWHGGDRMEAQTLADAYKNSLQLAAANNYRSIAFPAISTGVYGYPKEEAAEIAVRTVTAFLTRYNPLERVLFVCFDEETAAIYRRLLASYP.

The Macro domain maps to 1 to 175; the sequence is MAVQPEVILG…IYRRLLASYP (175 aa). Residues 11–12, N25, 33–35, and 122–126 contribute to the substrate site; these read DI, GVD, and STGVY. The Proton acceptor role is filled by D35.

This sequence belongs to the MacroD-type family. YmdB subfamily. As to quaternary structure, homodimer. Interacts with RNase III.

It carries out the reaction 3''-O-acetyl-ADP-D-ribose + H2O = ADP-D-ribose + acetate + H(+). It catalyses the reaction 2''-O-acetyl-ADP-D-ribose + H2O = ADP-D-ribose + acetate + H(+). Its function is as follows. Deacetylates O-acetyl-ADP ribose to yield ADP-ribose and free acetate. Down-regulates ribonuclease 3 (RNase III) activity. Acts by interacting directly with the region of the ribonuclease that is required for dimerization/activation. This Klebsiella pneumoniae (strain 342) protein is O-acetyl-ADP-ribose deacetylase.